The primary structure comprises 782 residues: Probable cyclic di-GMP phosphodiesterase PdeI (782 aa).

2 helical membrane passes run leucine 12–tyrosine 32 and leucine 286–threonine 306. One can recognise an EAL domain in the interval asparagine 527–lysine 781.

The protein localises to the cell membrane. The catalysed reaction is 3',3'-c-di-GMP + H2O = 5'-phosphoguanylyl(3'-&gt;5')guanosine + H(+). In terms of biological role, phosphodiesterase (PDE) that catalyzes the hydrolysis of cyclic-di-GMP (c-di-GMP) to 5'-pGpG. Overexpression reduces biofilm formation. Cyclic-di-GMP is a second messenger which controls cell surface-associated traits in bacteria. The polypeptide is Probable cyclic di-GMP phosphodiesterase PdeI (Escherichia coli (strain K12)).